Here is a 259-residue protein sequence, read N- to C-terminus: Ribonuclease PH (259 aa).

Residues Arg88 and Gly126–Arg128 each bind phosphate.

This sequence belongs to the RNase PH family. As to quaternary structure, homohexameric ring arranged as a trimer of dimers.

It carries out the reaction tRNA(n+1) + phosphate = tRNA(n) + a ribonucleoside 5'-diphosphate. Phosphorolytic 3'-5' exoribonuclease that plays an important role in tRNA 3'-end maturation. Removes nucleotide residues following the 3'-CCA terminus of tRNAs; can also add nucleotides to the ends of RNA molecules by using nucleoside diphosphates as substrates, but this may not be physiologically important. Probably plays a role in initiation of 16S rRNA degradation (leading to ribosome degradation) during starvation. In Mycobacterium avium (strain 104), this protein is Ribonuclease PH.